The following is a 70-amino-acid chain: NAD(P)H-quinone oxidoreductase subunit O (70 aa).

The protein belongs to the complex I NdhO subunit family. In terms of assembly, NDH-1 can be composed of about 15 different subunits; different subcomplexes with different compositions have been identified which probably have different functions.

The protein resides in the cellular thylakoid membrane. The enzyme catalyses a plastoquinone + NADH + (n+1) H(+)(in) = a plastoquinol + NAD(+) + n H(+)(out). It carries out the reaction a plastoquinone + NADPH + (n+1) H(+)(in) = a plastoquinol + NADP(+) + n H(+)(out). Functionally, NDH-1 shuttles electrons from an unknown electron donor, via FMN and iron-sulfur (Fe-S) centers, to quinones in the respiratory and/or the photosynthetic chain. The immediate electron acceptor for the enzyme in this species is believed to be plastoquinone. Couples the redox reaction to proton translocation, and thus conserves the redox energy in a proton gradient. Cyanobacterial NDH-1 also plays a role in inorganic carbon-concentration. The chain is NAD(P)H-quinone oxidoreductase subunit O from Nostoc sp. (strain PCC 7120 / SAG 25.82 / UTEX 2576).